A 381-amino-acid polypeptide reads, in one-letter code: Lipid-A-disaccharide synthase (381 aa).

It belongs to the LpxB family.

The catalysed reaction is a lipid X + a UDP-2-N,3-O-bis[(3R)-3-hydroxyacyl]-alpha-D-glucosamine = a lipid A disaccharide + UDP + H(+). It participates in bacterial outer membrane biogenesis; LPS lipid A biosynthesis. Condensation of UDP-2,3-diacylglucosamine and 2,3-diacylglucosamine-1-phosphate to form lipid A disaccharide, a precursor of lipid A, a phosphorylated glycolipid that anchors the lipopolysaccharide to the outer membrane of the cell. The chain is Lipid-A-disaccharide synthase from Psychromonas ingrahamii (strain DSM 17664 / CCUG 51855 / 37).